We begin with the raw amino-acid sequence, 346 residues long: Acrosin (346 aa).

The N-terminal stretch at 1–19 is a signal peptide; it reads MALLLPLAVLLAACRPGHG. 6 cysteine pairs are disulfide-bonded: Cys24/Cys146, Cys27/Cys154, Cys70/Cys86, Cys168/Cys240, Cys203/Cys219, and Cys230/Cys260. One can recognise a Peptidase S1 domain in the interval 41-284; that stretch reads VVGGTEALHG…FYNWILLQVR (244 aa). Residue His85 is the Charge relay system of the active site. N-linked (GlcNAc...) asparagine glycosylation is present at Asn128. The Charge relay system role is filled by Asp134. A glycan (N-linked (GlcNAc...) asparagine) is linked at Asn204. Ser234 acts as the Charge relay system in catalysis. The propeptide occupies 266 to 346; sequence PGIYTSTQHF…LLQSLWGSKA (81 aa).

Belongs to the peptidase S1 family. Heavy chain (catalytic) and a light chain linked by two disulfide bonds. Post-translationally, glycosylated.

The catalysed reaction is Preferential cleavage: Arg-|-Xaa, Lys-|-Xaa.. Its activity is regulated as follows. Inhibited by aprotinin, ovomucoid, soybean trypsin inhibitor, benzamidine, p-aminobenzamidine, and zinc ions. Activity also inhibited by a Kazal-type proteinase inhibitor. Serine protease of trypsin-like cleavage specificity. Synthesized in a zymogen form, proacrosin and stored in the acrosome. In Meleagris gallopavo (Wild turkey), this protein is Acrosin.